We begin with the raw amino-acid sequence, 366 residues long: tRNA/tmRNA (uracil-C(5))-methyltransferase (366 aa).

Positions 190, 218, 223, 239, and 299 each coordinate S-adenosyl-L-methionine. Residue cysteine 324 is the Nucleophile of the active site. Glutamate 358 functions as the Proton acceptor in the catalytic mechanism.

It belongs to the class I-like SAM-binding methyltransferase superfamily. RNA M5U methyltransferase family. TrmA subfamily.

The enzyme catalyses uridine(54) in tRNA + S-adenosyl-L-methionine = 5-methyluridine(54) in tRNA + S-adenosyl-L-homocysteine + H(+). The catalysed reaction is uridine(341) in tmRNA + S-adenosyl-L-methionine = 5-methyluridine(341) in tmRNA + S-adenosyl-L-homocysteine + H(+). In terms of biological role, dual-specificity methyltransferase that catalyzes the formation of 5-methyluridine at position 54 (m5U54) in all tRNAs, and that of position 341 (m5U341) in tmRNA (transfer-mRNA). The protein is tRNA/tmRNA (uracil-C(5))-methyltransferase of Cellvibrio japonicus (strain Ueda107) (Pseudomonas fluorescens subsp. cellulosa).